Reading from the N-terminus, the 2073-residue chain is Fatty acid synthase subunit beta (2073 aa).

The acetyltransferase stretch occupies residues 1-459 (MVEAEQVHQS…VYSTDDAGDL (459 aa)). Ser270 acts as the For acetyltransferase activity in catalysis. Residues 470–858 (ALAVMITEKV…TRGIMFWKEL (389 aa)) form an enoyl reductase region. Residue Ser1122 is modified to Phosphoserine. Residues 1155–1644 (GPEYTWFRAI…LPNTELITKL (490 aa)) form a dehydratase region. His1361 functions as the For dehydratase activity in the catalytic mechanism. The MaoC-like domain maps to 1558-1667 (PVFVTPPTNS…VEVLNQETSE (110 aa)). Residues 1645–2073 (SHTGMINGRK…LQNWDEYESS (429 aa)) are malonyl/palmitoyl transferase. Catalysis depends on Ser1828, which acts as the For malonyltransferase activity. Residue Ser2073 is modified to Phosphoserine.

This sequence belongs to the fungal fatty acid synthetase subunit beta family. [Alpha(6)beta(6)] hexamers of two multifunctional subunits (alpha and beta).

It catalyses the reaction acetyl-CoA + n malonyl-CoA + 2n NADPH + 4n H(+) = a long-chain-acyl-CoA + n CoA + n CO2 + 2n NADP(+).. The catalysed reaction is holo-[ACP] + acetyl-CoA = acetyl-[ACP] + CoA. The enzyme catalyses holo-[ACP] + malonyl-CoA = malonyl-[ACP] + CoA. It carries out the reaction a (3R)-hydroxyacyl-[ACP] = a (2E)-enoyl-[ACP] + H2O. It catalyses the reaction a 2,3-saturated acyl-[ACP] + NAD(+) = a (2E)-enoyl-[ACP] + NADH + H(+). The catalysed reaction is (9Z)-octadecenoyl-[ACP] + H2O = (9Z)-octadecenoate + holo-[ACP] + H(+). In terms of biological role, fatty acid synthetase catalyzes the formation of long-chain fatty acids from acetyl-CoA, malonyl-CoA and NADPH. The beta subunit contains domains for: [acyl-carrier-protein] acetyltransferase and malonyltransferase, S-acyl fatty acid synthase thioesterase, enoyl-[acyl-carrier-protein] reductase, and 3-hydroxypalmitoyl-[acyl-carrier-protein] dehydratase. The protein is Fatty acid synthase subunit beta (fas1) of Schizosaccharomyces pombe (strain 972 / ATCC 24843) (Fission yeast).